We begin with the raw amino-acid sequence, 223 residues long: Twisted gastrulation protein homolog 1 (223 aa).

A signal peptide spans 1–25 (MKLHYVAVLTLAILMFLTWLPASLS). Residues asparagine 52 and asparagine 81 are each glycosylated (N-linked (GlcNAc...) asparagine).

Belongs to the twisted gastrulation protein family. As to quaternary structure, interacts with CHRD and BMP4. This interaction enhances CHRD/BMP4 complex formation. Interacts with BMP7.

The protein localises to the secreted. Its function is as follows. May be involved in dorsoventral axis formation. Seems to antagonize BMP signaling by forming ternary complexes with CHRD and BMPs, thereby preventing BMPs from binding to their receptors. In addition to the anti-BMP function, also has pro-BMP activity, partly mediated by cleavage and degradation of CHRD, which releases BMPs from ternary complexes. May be an important modulator of BMP-regulated cartilage development and chondrocyte differentiation. May play a role in thymocyte development. This chain is Twisted gastrulation protein homolog 1 (TWSG1), found in Pongo abelii (Sumatran orangutan).